The following is a 313-amino-acid chain: FAM172 family protein homolog Y75B8A.31 (313 aa).

The interval 293–313 (VKSENSKESDDEAPKSKKICV) is disordered. The segment covering 296–307 (ENSKESDDEAPK) has biased composition (basic and acidic residues).

Belongs to the FAM172 family.

The protein is FAM172 family protein homolog Y75B8A.31 of Caenorhabditis elegans.